A 388-amino-acid polypeptide reads, in one-letter code: MAFVKAERLKLLPPYLFQEIDRLKAELTAKGVDVINLGVGDPDLPTPDHIIARLKTAAEDPSTHQYPSYSGMNDFKVSVAGWYKRRFGVELDPLSEVLTLIGSKEGLAHFPLAVINPGDLALVPTPAYPVYHVATMFAGGESYFMPLVRENGFLPDLDSIPADVARRAKVMFINYPNNPTGATAERDFFEKVIAFAREYDVIVCHDAAYTEMAFGGYRPLSFLELPGAGEVGVEFHSLSKTYNMTGWRLGFAVGNADILAGLGQVKSNIDSGAFNAVQWAGITALEGDQGCVVEMQRIYKERLDILIEGLKRIGLHPEVPRATFYVWCPTPPGYSSKDFSSLLLREAGIVATPGSGFGAPGEGYIRMALTVDKERVREAVERMRKLSF.

Residues Tyr-15 and Gly-40 each coordinate substrate. Pyridoxal 5'-phosphate contacts are provided by residues Tyr-69, 103–104 (SK), Tyr-128, Asn-178, Tyr-209, and 237–239 (SLS). Residues Lys-104, Tyr-128, and Asn-178 each contribute to the substrate site. The residue at position 240 (Lys-240) is an N6-(pyridoxal phosphate)lysine. Arg-248 contributes to the pyridoxal 5'-phosphate binding site. Arg-366 contacts substrate.

This sequence belongs to the class-I pyridoxal-phosphate-dependent aminotransferase family. LL-diaminopimelate aminotransferase subfamily. In terms of assembly, homodimer. Pyridoxal 5'-phosphate is required as a cofactor.

It carries out the reaction (2S,6S)-2,6-diaminopimelate + 2-oxoglutarate = (S)-2,3,4,5-tetrahydrodipicolinate + L-glutamate + H2O + H(+). The protein operates within amino-acid biosynthesis; L-lysine biosynthesis via DAP pathway; LL-2,6-diaminopimelate from (S)-tetrahydrodipicolinate (aminotransferase route): step 1/1. In terms of biological role, involved in the synthesis of meso-diaminopimelate (m-DAP or DL-DAP), required for both lysine and peptidoglycan biosynthesis. Catalyzes the direct conversion of tetrahydrodipicolinate to LL-diaminopimelate. Can also use m-DAP instead of LL-DAP as the amino-group donor. The sequence is that of LL-diaminopimelate aminotransferase from Syntrophobacter fumaroxidans (strain DSM 10017 / MPOB).